The chain runs to 234 residues: Cyclo(L-leucyl-L-leucyl) synthase (234 aa).

Residue serine 28 is the Nucleophile of the active site. Substrate-binding positions include 171 to 175 (YVLAE), tyrosine 195, and 200 to 201 (EL).

The protein belongs to the CDPS family.

It carries out the reaction 2 L-leucyl-tRNA(Leu) = cyclo(L-leucyl-L-leucyl) + 2 tRNA(Leu) + 2 H(+). It uses activated amino acids in the form of aminoacyl-tRNAs (aa-tRNAs) as substrates to catalyze the ATP-independent formation of cyclodipeptides which are intermediates in diketopiperazine (DKP) biosynthetic pathways. Catalyzes the formation of cyclo(L-Leu-L-Leu) (cLL) from L-leucyl-tRNA(Leu). Can incorporate various nonpolar residues, such as L-phenylalanine, L-leucine and L-methionine, into cyclodipeptides. The sequence is that of Cyclo(L-leucyl-L-leucyl) synthase from Staphylococcus haemolyticus (strain JCSC1435).